A 513-amino-acid chain; its full sequence is Histidine ammonia-lyase (513 aa).

The 5-imidazolinone (Ala-Gly) cross-link spans Ala142–Gly144. Ser143 is modified (2,3-didehydroalanine (Ser)).

Belongs to the PAL/histidase family. Contains an active site 4-methylidene-imidazol-5-one (MIO), which is formed autocatalytically by cyclization and dehydration of residues Ala-Ser-Gly.

It is found in the cytoplasm. It carries out the reaction L-histidine = trans-urocanate + NH4(+). The protein operates within amino-acid degradation; L-histidine degradation into L-glutamate; N-formimidoyl-L-glutamate from L-histidine: step 1/3. This chain is Histidine ammonia-lyase, found in Mesorhizobium japonicum (strain LMG 29417 / CECT 9101 / MAFF 303099) (Mesorhizobium loti (strain MAFF 303099)).